The primary structure comprises 175 residues: UPF0398 protein SPP_0409 (175 aa).

This sequence belongs to the UPF0398 family.

The protein is UPF0398 protein SPP_0409 of Streptococcus pneumoniae (strain P1031).